We begin with the raw amino-acid sequence, 1024 residues long: Protein tiptop (1024 aa).

Polar residues predominate over residues 20 to 35; that stretch reads ELTSPRCQSRDSNTSA. Disordered regions lie at residues 20-40 and 138-215; these read ELTSPRCQSRDSNTSAGAGAG and EGEV…ISAD. Acidic residues predominate over residues 159 to 175; it reads DDQEEDQEQDQEQEQEQ. A C2H2-type 1 zinc finger spans residues 317–341; sequence FKCVWCKQSFSTLANLTAHMKETQH. The disordered stretch occupies residues 350–392; the sequence is LPTGGVGTPSAPPPTRLATSASNSACSSSSSSTSSSSNSSKSE. The segment covering 368–391 has biased composition (low complexity); the sequence is TSASNSACSSSSSSTSSSSNSSKS. A C2H2-type 2 zinc finger spans residues 426–450; it reads LKCMWCGQSFRSLAEMTSHMQETQH. Disordered stretches follow at residues 466-489, 519-576, 712-759, 786-818, and 868-891; these read GDERERPTNTGVPSTSTAAPSSPS, AQKS…SLDS, SRDR…IKAE, FSMEACRESPRSVSKSPAPQTERSPPDNGSLLA, and ETTDPPSTGLRSASSAGSSTASAT. Low complexity predominate over residues 477–489; the sequence is VPSTSTAAPSSPS. The C2H2-type 3 zinc finger occupies 499-523; the sequence is LTCKVCDQAFGSLKELSTHMAQKSH. Over residues 527 to 537 the composition is skewed to low complexity; the sequence is SPAPSASPPAA. Residues 543–558 are compositionally biased toward basic residues; the sequence is KRGRQNRNEKRKKSLP. Positions 718–729 are enriched in low complexity; that stretch reads SESSSASRVESS. The span at 745–755 shows a compositional bias: pro residues; that stretch reads TPAPPPPPPPT. Over residues 786-795 the composition is skewed to basic and acidic residues; the sequence is FSMEACRESP. Residues 796-808 are compositionally biased toward polar residues; the sequence is RSVSKSPAPQTER. Positions 874 to 891 are enriched in low complexity; the sequence is STGLRSASSAGSSTASAT. Residues 926–949 form a C2H2-type 4 zinc finger; sequence IKCSYCDTPFASKGAYRHHLSKVH. The tract at residues 954–1004 is disordered; the sequence is AGEDSPRLKSPAVQSPRSMPLASPRRSASRSPATGSQQPPPSPTISPYDES. Low complexity predominate over residues 968 to 990; that stretch reads SPRSMPLASPRRSASRSPATGSQ.

This sequence belongs to the teashirt C2H2-type zinc-finger protein family. Expression in the Malpighian tubules (MTs) and stomatogastric nervous system starts at embryonic stage 10. At stage 11, expression in the head domain is initiated in the clypeolabrum in two bilaterally symmetric clusters of cells. At stage 12, expression appears in the central nervous system (CNS) of the trunk and the epidermis. The staining in the hindgut is maintained throughout embryogenesis. At stage 13, expression is present in elongating MTs. The anterior staining is detected in cells that invaginate into the stomodeum and by stage 15 onwards, in cells close to the pharynx. Also expressed in cells of the brain, the second constriction of the gut, the trunk epidermis, the anterior segments of the CNS (the three thoracic and the first two abdominal segments) and in the MTs. From stage 12 onwards, tsh and tio are colocalized in some cells.

The protein resides in the nucleus. Tiptop (tio) and teashirt (tsh) have, on the whole, common activities. Tio and tsh repress each other's expression and tsh has a crucial role for trunk patterning that is in part masked by ectopic expression of tiptop. Both genes share a common activity required for the activation of Ser and svb and the maintenance of en and wg. The sequence is that of Protein tiptop (tio) from Drosophila melanogaster (Fruit fly).